The primary structure comprises 152 residues: MKVIFLQDVKGKGKKGEIKEVPLGYAQNFLIKKNLAKEATKQAIGELKGKQKSEEKHAAELLAEAKRVKEQLEKEENRLQFTEKVGPDGRTFGSITAKKIAEGLQKQFGIKIDKRHIELEHPIRAIGLIEVPVKLHKEVNAQIKLNIKNSAE.

This sequence belongs to the bacterial ribosomal protein bL9 family.

Functionally, binds to the 23S rRNA. The chain is Large ribosomal subunit protein bL9 from Streptococcus thermophilus (strain ATCC BAA-491 / LMD-9).